Here is a 202-residue protein sequence, read N- to C-terminus: Zinc metalloproteinase barnettlysin-1 (202 aa).

One can recognise a Peptidase M12B domain in the interval arginine 6–asparagine 200. Residues glutamate 9 and aspartate 93 each contribute to the Ca(2+) site. 3 disulfide bridges follow: cysteine 117-cysteine 197, cysteine 157-cysteine 181, and cysteine 159-cysteine 164. Histidine 142 serves as a coordination point for Zn(2+). Glutamate 143 is a catalytic residue. Zn(2+) is bound by residues histidine 146 and histidine 152. Ca(2+) contacts are provided by cysteine 197 and asparagine 200.

In terms of assembly, monomer. Zn(2+) is required as a cofactor. As to expression, expressed by the venom gland.

Its subcellular location is the secreted. Its function is as follows. Non-hemorrhagic metalloproteinase that hydrolyzes the alpha chains of fibrinogen and fibrin but has no activity on beta- and gamma-chains. Cleaves X-Leu bonds. Inhibits platelet aggregation induced by the von Willebrand factor (VWF) (IC(50) is 1.4 uM) and type I collagen (IC(50) is 3.2 uM). Acts by cleaving the vWF and its receptor GPIb, and by cleaving the collagen-binding Alpha-2A domain of the collagen receptor alpha-2/beta-1 integrin (ITGA2/ITGB1). Also degrades the extracellular matrix protein fibronectin (FN1), but has no effect on laminin and type I collagen. This is Zinc metalloproteinase barnettlysin-1 from Bothrops barnetti (Barnett's lancehead).